The primary structure comprises 240 residues: Serine protease SplB (240 aa).

The N-terminal stretch at 1–36 is a signal peptide; that stretch reads MNKNVVIKSLAALTILTSVTGIGITLVEEVQQTAKA. Catalysis depends on charge relay system residues H75, D113, and S193.

This sequence belongs to the peptidase S1B family.

Its subcellular location is the secreted. Functionally, serine protease that cleaves specifically after the sequence Trp-Glu-Leu-Gln. The polypeptide is Serine protease SplB (splB) (Staphylococcus aureus (strain MW2)).